A 64-amino-acid polypeptide reads, in one-letter code: Defensin-like protein 41 (64 aa).

The disordered stretch occupies residues 1 to 21; that stretch reads MTQGKRKHPCDLKNPSKRAPP. 4 cysteine pairs are disulfide-bonded: Cys-10–Cys-61, Cys-24–Cys-47, Cys-33–Cys-56, and Cys-37–Cys-58.

Belongs to the DEFL family.

In Arabidopsis thaliana (Mouse-ear cress), this protein is Defensin-like protein 41.